Here is a 549-residue protein sequence, read N- to C-terminus: Formate--tetrahydrofolate ligase (549 aa).

Residue 60–67 (TPYGEGKT) coordinates ATP.

It belongs to the formate--tetrahydrofolate ligase family.

It carries out the reaction (6S)-5,6,7,8-tetrahydrofolate + formate + ATP = (6R)-10-formyltetrahydrofolate + ADP + phosphate. Its pathway is one-carbon metabolism; tetrahydrofolate interconversion. This is Formate--tetrahydrofolate ligase from Campylobacter concisus (strain 13826).